The chain runs to 311 residues: Histidine decarboxylase proenzyme (311 aa).

Substrate-binding residues include Asp64 and Ser82. Pyruvic acid (Ser) is present on Ser83. The active-site Proton donor is Glu198.

As to quaternary structure, the proenzyme is a hexamer of identical pi chains; each pi chain monomer is cleaved to form a small (or beta) chain and a large (or alpha) chain by non-hydrolytic self-catalysis. The cofactor is pyruvate.

It catalyses the reaction L-histidine + H(+) = histamine + CO2. In Lactobacillus sp. (strain 30a), this protein is Histidine decarboxylase proenzyme (hdcA).